Reading from the N-terminus, the 347-residue chain is NADH-ubiquinone oxidoreductase chain 2 (347 aa).

10 helical membrane-spanning segments follow: residues 3–23 (PPILIIIMATIMTGTMIVMLS), 25–45 (HWLLIWIGFEMNMLAIIPILM), 66–86 (ASMLLMMGVTINLLYSGQWVI), 111–131 (FHFWVPEVTQGITLMSGMILL), 149–169 (INTNLLMLMALTSVLVGGWGG), 178–198 (IMAYSSIAHMGWMAAIITYNP), 201–221 (MVLNLTLYILMTLSTFMLFML), 237–257 (FPLITSMILILMLSLGGLPPL), 274–294 (NMIIIPTLMAITALLNLYFYL), and 325–345 (LLPPLIITSTMLLPLTPMLSV).

This sequence belongs to the complex I subunit 2 family. Core subunit of respiratory chain NADH dehydrogenase (Complex I) which is composed of 45 different subunits. Interacts with TMEM242.

The protein localises to the mitochondrion inner membrane. The enzyme catalyses a ubiquinone + NADH + 5 H(+)(in) = a ubiquinol + NAD(+) + 4 H(+)(out). Functionally, core subunit of the mitochondrial membrane respiratory chain NADH dehydrogenase (Complex I) which catalyzes electron transfer from NADH through the respiratory chain, using ubiquinone as an electron acceptor. Essential for the catalytic activity and assembly of complex I. In Canis lupus familiaris (Dog), this protein is NADH-ubiquinone oxidoreductase chain 2.